The primary structure comprises 166 residues: MLSEDLVKSGAIKFGDFILTSGKRSDYYVDIKEAATDPNLLSEIASEFSKMIHARKIAGMELGAVPLIVATSLNMGIPYVIVRKERSHGTLSLIVGRLNRGEEVDVIEDVVTTGNSVLKAINVLRENGVVVKDAYCVVDREEGGAKLLENNGIKLHPIVRISELKR.

5-phospho-alpha-D-ribose 1-diphosphate contacts are provided by residues Arg-83, Lys-84, Arg-86, His-88, and 108–116 (EDVVTTGNS). Residues Thr-112 and Arg-140 each coordinate orotate.

It belongs to the purine/pyrimidine phosphoribosyltransferase family. PyrE subfamily. In terms of assembly, homodimer. The cofactor is Mg(2+).

The enzyme catalyses orotidine 5'-phosphate + diphosphate = orotate + 5-phospho-alpha-D-ribose 1-diphosphate. The protein operates within pyrimidine metabolism; UMP biosynthesis via de novo pathway; UMP from orotate: step 1/2. Functionally, catalyzes the transfer of a ribosyl phosphate group from 5-phosphoribose 1-diphosphate to orotate, leading to the formation of orotidine monophosphate (OMP). This is Orotate phosphoribosyltransferase from Thermoplasma volcanium (strain ATCC 51530 / DSM 4299 / JCM 9571 / NBRC 15438 / GSS1).